The sequence spans 561 residues: DNA ligase (561 aa).

Residue E247 coordinates ATP. The N6-AMP-lysine intermediate role is filled by K249. ATP is bound by residues R254, R269, E299, F339, R414, and K420.

This sequence belongs to the ATP-dependent DNA ligase family. In terms of assembly, monomer. Mg(2+) serves as cofactor.

The catalysed reaction is ATP + (deoxyribonucleotide)n-3'-hydroxyl + 5'-phospho-(deoxyribonucleotide)m = (deoxyribonucleotide)n+m + AMP + diphosphate.. Its function is as follows. DNA ligase that seals nicks in double-stranded DNA during DNA replication, DNA recombination and DNA repair. This chain is DNA ligase, found in Pyrococcus furiosus (strain ATCC 43587 / DSM 3638 / JCM 8422 / Vc1).